The sequence spans 147 residues: UPF0306 protein YhbP (147 aa).

It belongs to the UPF0306 family.

This chain is UPF0306 protein YhbP, found in Shigella dysenteriae serotype 1 (strain Sd197).